The following is a 216-amino-acid chain: MHGNGGQPAAGGSESALSREGQPGPSGAAQGQVISNERSPRRYSTRTINGVQATNKFTAVGNPSLQRDPDWYRWNYNHSIAVWLRECSRSHAKICNCGQFRKHWFQECAGLEDRSTQASLEEAILRPLRVQGKRAKRKLDYHYSQPTPNRKKVYKTVRWQDELADREADFTPSEEDGGTTSSDFDEDINFDIGGDSGIVDELLGRPFTTPAPVRIV.

Positions 1–50 (MHGNGGQPAAGGSESALSREGQPGPSGAAQGQVISNERSPRRYSTRTING) are disordered. The segment covering 21 to 32 (GQPGPSGAAQGQ) has biased composition (low complexity). The active-site Phosphocysteine intermediate is Cys95. Residues 165-187 (DREADFTPSEEDGGTTSSDFDED) form a disordered region. Over residues 172-187 (PSEEDGGTTSSDFDED) the composition is skewed to acidic residues.

Belongs to the gyrovirus protein VP2 family.

It catalyses the reaction O-phospho-L-tyrosyl-[protein] + H2O = L-tyrosyl-[protein] + phosphate. It carries out the reaction O-phospho-L-seryl-[protein] + H2O = L-seryl-[protein] + phosphate. The catalysed reaction is O-phospho-L-threonyl-[protein] + H2O = L-threonyl-[protein] + phosphate. In terms of biological role, may act as a scaffold protein in virion assembly. May also play a role in intracellular signaling during viral replication. This Gallus gallus (Chicken) protein is Dual specificity protein phosphatase VP2 (VP2).